The chain runs to 305 residues: Delta-9 acyl-lipid desaturase 1 (305 aa).

Positions Met-1–Ala-20 are disordered. 2 helical membrane-spanning segments follow: residues Ile-39–Phe-59 and Thr-60–Val-80. Fe cation is bound by residues His-83, His-88, His-120, His-123, and His-124. The Histidine box-1 signature appears at His-83–His-88. Positions His-120–His-124 match the Histidine box-2 motif. The chain crosses the membrane as a helical span at residues Val-180–Leu-200. Residues His-223, His-252, His-255, and His-256 each contribute to the Fe cation site. The Histidine box-3 motif lies at His-252–His-256. A helical membrane pass occupies residues Trp-268–Thr-288.

It belongs to the fatty acid desaturase type 1 family. Fe cation serves as cofactor. As to expression, strongly expressed in inflorescence meristems, leaves, and flowers, and weakly in roots and seedpods.

The protein resides in the endoplasmic reticulum membrane. Its subcellular location is the plastid. It localises to the chloroplast membrane. The protein operates within lipid metabolism; polyunsaturated fatty acid biosynthesis. Involved in delta-9 desaturation of fatty acids. Involved in the production of very-long-chain fatty acids (VLCFAs). May desaturate chloroplastic monogalactosyl diacylglycerol (MGDG) and alter chloroplast membrane fluidity, which is required to prime a cold acclimation response. The polypeptide is Delta-9 acyl-lipid desaturase 1 (Arabidopsis thaliana (Mouse-ear cress)).